A 185-amino-acid polypeptide reads, in one-letter code: Auxin-responsive protein IAA34 (185 aa).

The EAR-like (transcriptional repression) signature appears at 63–67 (LGLSL). A PB1 domain is found at 92 to 180 (WGYVKVTMDG…ERLRITRRND (89 aa)).

This sequence belongs to the Aux/IAA family. Homodimers and heterodimers.

The protein localises to the nucleus. Its function is as follows. Aux/IAA proteins are short-lived transcriptional factors that function as repressors of early auxin response genes at low auxin concentrations. Repression is thought to result from the interaction with auxin response factors (ARFs), proteins that bind to the auxin-responsive promoter element (AuxRE). Formation of heterodimers with ARF proteins may alter their ability to modulate early auxin response genes expression. This chain is Auxin-responsive protein IAA34 (IAA34), found in Arabidopsis thaliana (Mouse-ear cress).